Here is a 122-residue protein sequence, read N- to C-terminus: Small ribosomal subunit protein uS13 (122 aa).

The disordered stretch occupies residues G95 to K122.

The protein belongs to the universal ribosomal protein uS13 family. Part of the 30S ribosomal subunit. Forms a loose heterodimer with protein S19. Forms two bridges to the 50S subunit in the 70S ribosome.

Located at the top of the head of the 30S subunit, it contacts several helices of the 16S rRNA. In the 70S ribosome it contacts the 23S rRNA (bridge B1a) and protein L5 of the 50S subunit (bridge B1b), connecting the 2 subunits; these bridges are implicated in subunit movement. Contacts the tRNAs in the A and P-sites. The polypeptide is Small ribosomal subunit protein uS13 (Corynebacterium aurimucosum (strain ATCC 700975 / DSM 44827 / CIP 107346 / CN-1) (Corynebacterium nigricans)).